The primary structure comprises 157 residues: MRLPRGVGDAAELRKSLKPLLEKRRRARINESLSQLKGLVLPLLGAETSRYSKLEKADILEMTVRFLREQPASVCSTEAPGSLDSYLEGYRACLARLARVLPACSVLEPAVSARLLEHLRQRTVSGGPPSLTPASASAPAPSPPVPPPSSLGLWRPW.

Positions 13 to 70 constitute a bHLH domain; that stretch reads LRKSLKPLLEKRRRARINESLSQLKGLVLPLLGAETSRYSKLEKADILEMTVRFLREQ. Positions 86-119 constitute an Orange domain; the sequence is YLEGYRACLARLARVLPACSVLEPAVSARLLEHL. A disordered region spans residues 124 to 157; that stretch reads VSGGPPSLTPASASAPAPSPPVPPPSSLGLWRPW. The segment covering 125-139 has biased composition (low complexity); it reads SGGPPSLTPASASAP. The span at 140–149 shows a compositional bias: pro residues; the sequence is APSPPVPPPS. Positions 154-157 match the WRPW motif motif; the sequence is WRPW.

As to quaternary structure, transcription repression requires formation of a complex with a corepressor protein of the Groucho/TLE family.

It is found in the nucleus. Functionally, transcriptional repressor of genes that require a bHLH protein for their transcription. In Rattus norvegicus (Rat), this protein is Transcription factor HES-2 (Hes2).